A 488-amino-acid polypeptide reads, in one-letter code: L-arabinose isomerase 1 (488 aa).

Positions 306, 331, 348, and 447 each coordinate Mn(2+).

This sequence belongs to the arabinose isomerase family. Requires Mn(2+) as cofactor.

It carries out the reaction beta-L-arabinopyranose = L-ribulose. The protein operates within carbohydrate degradation; L-arabinose degradation via L-ribulose; D-xylulose 5-phosphate from L-arabinose (bacterial route): step 1/3. Its function is as follows. Catalyzes the conversion of L-arabinose to L-ribulose. The protein is L-arabinose isomerase 1 of Clostridium acetobutylicum (strain ATCC 824 / DSM 792 / JCM 1419 / IAM 19013 / LMG 5710 / NBRC 13948 / NRRL B-527 / VKM B-1787 / 2291 / W).